We begin with the raw amino-acid sequence, 89 residues long: Large ribosomal subunit protein eL43 (89 aa).

A disordered region spans residues 1–28; it reads MVKKSKVGSTGRFGARYGRKAKRTVKDI. Residues 38 to 59 form a C4-type zinc finger; it reads CPKCDRPGVKRTHAGIWKCRKC.

It belongs to the eukaryotic ribosomal protein eL43 family. Requires Zn(2+) as cofactor.

The polypeptide is Large ribosomal subunit protein eL43 (Methanosphaera stadtmanae (strain ATCC 43021 / DSM 3091 / JCM 11832 / MCB-3)).